The primary structure comprises 1104 residues: tRNA ligase 1 (1104 aa).

The active-site N6-AMP-lysine intermediate is the K152.

Belongs to the TRL1 family. Requires Mg(2+) as cofactor. Mainly expressed in proliferating cells and tissues such as root meristems, the vasculature of developing plantlets, flowers and elongating tissue.

The protein resides in the nucleus. It localises to the cytoplasm. It catalyses the reaction ATP + (ribonucleotide)n-3'-hydroxyl + 5'-phospho-(ribonucleotide)m = (ribonucleotide)n+m + AMP + diphosphate.. With respect to regulation, requires the presence of NTP, preferentially ATP rather than dATP, UTP, CTP and GTP, respectively, to mediate ribonucleotide 5'-phosphorylation. Its function is as follows. Essential component of stress-response pathways entailing repair of RNA breaks with 2',3'-cyclic phosphate and 5'-OH ends. Tri-functional enzyme that repairs RNA breaks with 2',3'-cyclic-PO(4) and 5'-OH ends. The ligation activity requires three sequential enzymatic activities: opening of the 2'3'-cyclic phosphodiester bond of the 5' half-tRNA leaving a 2'-phosphomonoester (CPDase activity), phosphorylation of the 5' terminus of the 3' half-tRNA in the presence of ATP (kinase activity) and ligation of the two tRNA halves in an ATP-dependent reaction (ligase activity). Deficient in transferring AMP to pRNA(OH) to form AppRNA(OH) but proficient at sealing pre-adenylylated AppRNA(OH). CPDase and kinase reactions are almost insensitive to RNA length, whereas the ligase activity decreases with shorter RNA size. Can also splice DNA ended by a single 3'-terminal ribonucleoside 2',3'-cyclic-PO(4). Binds to mRNA, mature and immature. Exhibits tRNA ligase activity in vitro. Required for the splicing of precursor tRNA molecules containing introns. Can circularize an intron cleaved from a pre-tRNA by splicing endonuclease in vitro. Seems not involved in unfolded protein response (UPR) in the endoplasmic reticulum. Involved in auxin signaling and polar transport during organ morphogenesis. The protein is tRNA ligase 1 of Arabidopsis thaliana (Mouse-ear cress).